The primary structure comprises 27 residues: Equinin A (27 aa).

Residues Ala1–Asp13 are compositionally biased toward basic and acidic residues. Residues Ala1–Gly27 form a disordered region.

The protein localises to the secreted. Peptide with unknown function. Does not show antimicrobial and hemolytic activities. The protein is Equinin A of Actinia equina (Beadlet anemone).